Reading from the N-terminus, the 283-residue chain is MLRVAVPNKGSLSESAAEILSEAGYRRRTDSRDLTVLDPANQVEFFFLRPKDIAIYVGSGELDLGITGRDLAGDSGAPVSERLSLGFGRSSFRYAAPAGKDWAVEDLSGLRIATSYPNLVRKDLTDRGLDATVIRLDGAVEISIQLGVADAIADVVGSGRTLRQHNLVAFGESLCDSEGVLIERTGAPQDDPARNQLIERVRGIVFAQQNLMIDYDCPRTILDDAIKMTPGMESPTLSPLADPDWVAVRAMVPIKGHNQVMDALAELGAKAILASNIRSVRAF.

Belongs to the ATP phosphoribosyltransferase family. Long subfamily. Requires Mg(2+) as cofactor.

Its subcellular location is the cytoplasm. It carries out the reaction 1-(5-phospho-beta-D-ribosyl)-ATP + diphosphate = 5-phospho-alpha-D-ribose 1-diphosphate + ATP. It functions in the pathway amino-acid biosynthesis; L-histidine biosynthesis; L-histidine from 5-phospho-alpha-D-ribose 1-diphosphate: step 1/9. With respect to regulation, feedback inhibited by histidine. Functionally, catalyzes the condensation of ATP and 5-phosphoribose 1-diphosphate to form N'-(5'-phosphoribosyl)-ATP (PR-ATP). Has a crucial role in the pathway because the rate of histidine biosynthesis seems to be controlled primarily by regulation of HisG enzymatic activity. The sequence is that of ATP phosphoribosyltransferase from Rhodococcus erythropolis (strain PR4 / NBRC 100887).